The sequence spans 262 residues: UDP-2,3-diacylglucosamine hydrolase (262 aa).

Mn(2+)-binding residues include Asp10, His12, Asp47, Asn86, His121, His218, and His220.

The protein belongs to the LpxH family. The cofactor is Mn(2+).

The protein localises to the cell inner membrane. Its subcellular location is the cytoplasm. It catalyses the reaction UDP-2-N,3-O-bis[(3R)-3-hydroxytetradecanoyl]-alpha-D-glucosamine + H2O = 2-N,3-O-bis[(3R)-3-hydroxytetradecanoyl]-alpha-D-glucosaminyl 1-phosphate + UMP + 2 H(+). It participates in glycolipid biosynthesis; lipid IV(A) biosynthesis; lipid IV(A) from (3R)-3-hydroxytetradecanoyl-[acyl-carrier-protein] and UDP-N-acetyl-alpha-D-glucosamine: step 4/6. Its function is as follows. Hydrolyzes the pyrophosphate bond of UDP-2,3-diacylglucosamine to yield 2,3-diacylglucosamine 1-phosphate (lipid X) and UMP by catalyzing the attack of water at the alpha-P atom. Involved in the biosynthesis of lipid A, a phosphorylated glycolipid that anchors the lipopolysaccharide to the outer membrane of the cell. The polypeptide is UDP-2,3-diacylglucosamine hydrolase (Porphyromonas gingivalis (strain ATCC BAA-308 / W83)).